A 263-amino-acid polypeptide reads, in one-letter code: Serine protease ami (263 aa).

The N-terminal stretch at 1–21 (MNISRVLFAVVLVLTVSTYEC) is a signal peptide. A glycan (N-linked (GlcNAc...) asparagine) is linked at Asn2. The propeptide at 22 to 26 (RPRGR) is activation peptide. A Peptidase S1 domain is found at 27-254 (ILGGQDSKEK…YKSWIMETMY (228 aa)). Cys52 and Cys68 form a disulfide bridge. The Charge relay system role is filled by His67. Residues Asn73, Asn74, and Asn108 are each glycosylated (N-linked (GlcNAc...) asparagine). Residue Asp115 is the Charge relay system of the active site. 3 disulfide bridges follow: Cys149/Cys215, Cys180/Cys196, and Cys205/Cys230. Residue Ser209 is the Charge relay system of the active site. A glycan (N-linked (GlcNAc...) asparagine) is linked at Asn255.

It belongs to the peptidase S1 family. In terms of tissue distribution, in the embryo, localizes to paraxial regions at the neurula stage and anterior ventral regions at the tailbud stage. From the late tailbud to tadpole stage, expressed along the forming blood vessels including the anterior cardinal veins, posterior cardinal veins, intersomitic veins, dorsal longitudinal anastomosing vessel, dorsal aorta, pronephric sinus and most prominently around the vascular vitelline network, where expression shows left-right asymmetry in the stage 42 embryo. Localizes to endothelial cells. In adults, shows highest expression in liver with moderate levels of expression in the fat body, lung, gut and vessels. Weakly expressed in adult heart, muscle, testis and ovary.

It localises to the secreted. Functionally, probable serine protease. The chain is Serine protease ami from Xenopus laevis (African clawed frog).